The sequence spans 277 residues: Large ribosomal subunit protein uL2c (277 aa).

Residues 1-11 are compositionally biased toward polar residues; that stretch reads MNTRSYSTFTP. Disordered regions lie at residues 1 to 47 and 254 to 277; these read MNTR…RNNS and YSAL…RRRK.

It belongs to the universal ribosomal protein uL2 family. In terms of assembly, part of the 50S ribosomal subunit.

Its subcellular location is the plastid. The protein resides in the chloroplast. In Cryptomeria japonica (Japanese cedar), this protein is Large ribosomal subunit protein uL2c (rpl2).